The following is a 118-amino-acid chain: Ribonuclease P protein component (118 aa).

The protein belongs to the RnpA family. In terms of assembly, consists of a catalytic RNA component (M1 or rnpB) and a protein subunit.

The catalysed reaction is Endonucleolytic cleavage of RNA, removing 5'-extranucleotides from tRNA precursor.. Its function is as follows. RNaseP catalyzes the removal of the 5'-leader sequence from pre-tRNA to produce the mature 5'-terminus. It can also cleave other RNA substrates such as 4.5S RNA. The protein component plays an auxiliary but essential role in vivo by binding to the 5'-leader sequence and broadening the substrate specificity of the ribozyme. The polypeptide is Ribonuclease P protein component (Rickettsia felis (strain ATCC VR-1525 / URRWXCal2) (Rickettsia azadi)).